Here is a 359-residue protein sequence, read N- to C-terminus: Proton-gated ion channel (359 aa).

The signal sequence occupies residues 1 to 43 (MFPTGWRPKLSESIAASRMLWQPMAAVAVVQIGLLWFSPPVWG). The Periplasmic segment spans residues 44 to 235 (QDMVSPPPPI…LDYQLRISRQ (192 aa)). A helical transmembrane segment spans residues 236–258 (YFSYIPNIILPMLFILFISWTAF). Residues 259–261 (WST) lie on the Cytoplasmic side of the membrane. Residues 262 to 286 (SYEANVTLVVSTLIAHIAFNILVET) traverse the membrane as a helical segment. Residues 287-294 (NLPKTPYM) are Periplasmic-facing. The chain crosses the membrane as a helical span at residues 295–323 (TYTGAIIFMIYLFYFVAVIEVTVQHYLKV). At 324–326 (ESQ) the chain is on the cytoplasmic side. A helical membrane pass occupies residues 327–359 (PARAASITRASRIAFPVVFLLANIILAFLFFGF).

This sequence belongs to the ligand-gated ion channel (TC 1.A.9) family. In terms of assembly, homopentamer.

Its subcellular location is the cell inner membrane. Its activity is regulated as follows. Tetraethylammonium (TEA) and tetrabutylammonium (TBA) inhibit the proton-activated currents in a dose- and voltage-dependent manner in vitro, whereas the blocker of acid sensing ion channels, amiloride, has no effect. Channel current of GLIC can be inhibited by inhaled and intravenous general anesthetics at and below concentrations used clinically. Ion conduction is also inhibited by lidocaine and by divalent transition metal ions such as cadmium ions. Cationic channel with similar permeabilities for Na(+) and K(+), that is activated by an increase of the proton concentration on the extracellular side. Displays no permeability for chloride ions. Shows slow kinetics of activation, no desensitization and a single channel conductance of 8 pS. Might contribute to adaptation to external pH change. In Gloeobacter violaceus (strain ATCC 29082 / PCC 7421), this protein is Proton-gated ion channel (glvI).